Consider the following 206-residue polypeptide: Small ribosomal subunit protein uS4 (206 aa).

A disordered region spans residues 18–46 (NIWGRPKSPVNRREYGPGQHGQRRKGKLS). An S4 RNA-binding domain is found at 94–156 (RRLDAVVYRA…SKQNVAVLEA (63 aa)).

Belongs to the universal ribosomal protein uS4 family. Part of the 30S ribosomal subunit. Contacts protein S5. The interaction surface between S4 and S5 is involved in control of translational fidelity.

One of the primary rRNA binding proteins, it binds directly to 16S rRNA where it nucleates assembly of the body of the 30S subunit. Its function is as follows. With S5 and S12 plays an important role in translational accuracy. This chain is Small ribosomal subunit protein uS4, found in Ruegeria sp. (strain TM1040) (Silicibacter sp.).